The primary structure comprises 464 residues: Plant intracellular Ras-group-related LRR protein 3 (464 aa).

A coiled-coil region spans residues 106 to 138; the sequence is AAVVSLEEVHEGYEKQLRDLEEEIGRVYASAVE. 10 LRR repeats span residues 160-183, 184-206, 207-230, 232-252, 254-275, 276-299, 301-322, 323-347, 348-370, and 372-393; these read GGVV…LGKI, VGLV…ISGL, EKLE…GLLL, LRIL…IAQC, SLVE…FGYG, LLNL…ICEM, SLRY…IGRL, TNLE…ISDL, ANLR…FFRL, and KLEK…MVNQ. The GVYW; degenerate motif lies at 398–406; sequence VREFMRKRW.

It belongs to the SHOC2 family. In terms of tissue distribution, widely expressed.

Functionally, leucine-rich repeat protein that likely mediates protein interactions, possibly in the context of signal transduction. The protein is Plant intracellular Ras-group-related LRR protein 3 (PIRL3) of Arabidopsis thaliana (Mouse-ear cress).